The primary structure comprises 425 residues: Histidine--tRNA ligase (425 aa).

The protein belongs to the class-II aminoacyl-tRNA synthetase family. In terms of assembly, homodimer.

The protein localises to the cytoplasm. It carries out the reaction tRNA(His) + L-histidine + ATP = L-histidyl-tRNA(His) + AMP + diphosphate + H(+). This Histophilus somni (strain 129Pt) (Haemophilus somnus) protein is Histidine--tRNA ligase.